The sequence spans 628 residues: Kelch-like protein diablo (628 aa).

The interval 1–56 (MGDLPGSTGGGSGPAAAGNASGNASSAGNTGLGVAGTTGVDRPPSPARLSHTSEKH) is disordered. A compositionally biased stretch (low complexity) spans 14–29 (PAAAGNASGNASSAGN). The 68-residue stretch at 74-141 (CDVVLNVGGR…CYTAHIIVEE (68 aa)) folds into the BTB domain. One can recognise a BACK domain in the interval 176–278 (CLGIRAFADT…SPKFLVGTVG (103 aa)). 6 Kelch repeats span residues 325–371 (VLFA…VLND), 373–419 (LYAV…VLDG), 420–466 (FLYA…VLGG), 468–513 (LYAI…VFNN), 515–560 (IYAV…VVNG), and 561–607 (QLYA…VMRA).

It participates in protein modification; protein ubiquitination. In terms of biological role, probable substrate-specific adapter of an E3 ubiquitin-protein ligase complex which mediates the ubiquitination and subsequent proteasomal degradation of target proteins. May have a role in synapse differentiation and growth. In Drosophila pseudoobscura pseudoobscura (Fruit fly), this protein is Kelch-like protein diablo.